Reading from the N-terminus, the 341-residue chain is MPFLIELLRITGIVTLCPKYRLDRNSLLLVATKRNYIDVVRYLVKKGVDINFQETIRDNLTPLMIASRFNSHQLVELLLNNGAIINQRSLTCGNTALHLAVKNDNRITVDILLFHGANTNITNNDGFTPLHKAVIYNASIDIIKKLLRYKADVNIRDNEEENTGLTPLDIAMSCNNYEIISLLVSHVIRLDYSTCMSNKTKGFDHNKKLVKDNKRLQRIAIHCLKDIEKMKQVSINSRFTLFDLFVNNNVDLLLRCINKDNRFIVNFDKKLTVFNILYTDFIDTFMSRHVLLNKASKVLEDLFLDNDSNTSSWNNLPNEIKDHIFTYINNDELKIMTGSKT.

5 ANK repeats span residues 23–55 (DRNS…FQET), 58–87 (DNLT…IINQ), 92–124 (CGNT…ITNN), 125–158 (DGFT…IRDN), and 163–195 (TGLT…YSTC).

The polypeptide is Putative ankyrin repeat protein FPV031 (ANK3) (Fowlpox virus (strain NVSL) (FPV)).